The following is a 538-amino-acid chain: CWF19-like protein 1 (538 aa).

Positions 298-324 are disordered; that stretch reads QGRKRSSTGRDSKSSPHPKQPRKPPQP.

It belongs to the CWF19 family. As to expression, expressed in many brain regions, including cerebellum, thalamus and occipital, parietal and temporal lobes (at protein level). Also expressed in the spinal cord (at protein level).

In Homo sapiens (Human), this protein is CWF19-like protein 1 (CWF19L1).